A 92-amino-acid chain; its full sequence is Small ribosomal subunit protein uS19c (92 aa).

Belongs to the universal ribosomal protein uS19 family.

The protein localises to the plastid. It is found in the chloroplast. In terms of biological role, protein S19 forms a complex with S13 that binds strongly to the 16S ribosomal RNA. This is Small ribosomal subunit protein uS19c from Tupiella akineta (Green alga).